A 521-amino-acid chain; its full sequence is Phosphoenolpyruvate carboxykinase (ATP) (521 aa).

3 residues coordinate substrate: Arg-52, Tyr-186, and Lys-192. Residues Lys-192, His-211, and Gly-227 to Thr-235 each bind ATP. Residues Lys-192 and His-211 each contribute to the Mn(2+) site. Asp-248 is a Mn(2+) binding site. Residues Glu-276, Arg-313, Arg-432–Ile-433, and Thr-438 contribute to the ATP site. Residue Arg-313 participates in substrate binding.

It belongs to the phosphoenolpyruvate carboxykinase (ATP) family. Mn(2+) serves as cofactor.

The protein resides in the cytoplasm. The enzyme catalyses oxaloacetate + ATP = phosphoenolpyruvate + ADP + CO2. It participates in carbohydrate biosynthesis; gluconeogenesis. Its function is as follows. Involved in the gluconeogenesis. Catalyzes the conversion of oxaloacetate (OAA) to phosphoenolpyruvate (PEP) through direct phosphoryl transfer between the nucleoside triphosphate and OAA. In Caldanaerobacter subterraneus subsp. tengcongensis (strain DSM 15242 / JCM 11007 / NBRC 100824 / MB4) (Thermoanaerobacter tengcongensis), this protein is Phosphoenolpyruvate carboxykinase (ATP).